The sequence spans 551 residues: Glucans biosynthesis protein D (551 aa).

The tat-type signal signal peptide spans 1–32 (MNRRRFIKGSMAMAAVCGSSGIASLFSQAAFA).

This sequence belongs to the OpgD/OpgG family. In terms of processing, predicted to be exported by the Tat system. The position of the signal peptide cleavage has not been experimentally proven.

The protein resides in the periplasm. Its pathway is glycan metabolism; osmoregulated periplasmic glucan (OPG) biosynthesis. Functionally, probably involved in the control of the structural glucose backbone of osmoregulated periplasmic glucans (OPGs). The polypeptide is Glucans biosynthesis protein D (mdoD) (Salmonella typhimurium (strain LT2 / SGSC1412 / ATCC 700720)).